A 77-amino-acid chain; its full sequence is Conotoxin Cl6.12 (77 aa).

Residues 1–20 (MKFYLLLTAALLLTAVIIEA) form the signal peptide. A propeptide spanning residues 21–36 (APTDHQDEARDLMREE) is cleaved from the precursor. 3 disulfides stabilise this stretch: Cys-43–Cys-58, Cys-51–Cys-62, and Cys-57–Cys-68.

As to expression, expressed by the venom duct.

The protein resides in the secreted. The polypeptide is Conotoxin Cl6.12 (Californiconus californicus (California cone)).